The primary structure comprises 467 residues: ATP synthase subunit beta (467 aa).

Position 154-161 (154-161 (GGAGVGKT)) interacts with ATP.

Belongs to the ATPase alpha/beta chains family. As to quaternary structure, F-type ATPases have 2 components, CF(1) - the catalytic core - and CF(0) - the membrane proton channel. CF(1) has five subunits: alpha(3), beta(3), gamma(1), delta(1), epsilon(1). CF(0) has three main subunits: a(1), b(2) and c(9-12). The alpha and beta chains form an alternating ring which encloses part of the gamma chain. CF(1) is attached to CF(0) by a central stalk formed by the gamma and epsilon chains, while a peripheral stalk is formed by the delta and b chains.

Its subcellular location is the cell inner membrane. The catalysed reaction is ATP + H2O + 4 H(+)(in) = ADP + phosphate + 5 H(+)(out). In terms of biological role, produces ATP from ADP in the presence of a proton gradient across the membrane. The catalytic sites are hosted primarily by the beta subunits. This is ATP synthase subunit beta from Petrotoga mobilis (strain DSM 10674 / SJ95).